A 431-amino-acid chain; its full sequence is Keratin, type I cytoskeletal 40 (431 aa).

Residues methionine 1–glutamate 89 are head. An IF rod domain is found at glutamate 89–leucine 400. A coil 1A region spans residues lysine 90–glutamine 124. Positions cysteine 125 to aspartate 135 are linker 1. Residues tyrosine 136 to glutamate 236 are coil 1B. The segment at glutamine 237–valine 252 is linker 12. The coil 2 stretch occupies residues aspartate 253 to glutamate 396. A tail region spans residues aspartate 397–alanine 431.

The protein belongs to the intermediate filament family. Heterotetramer of two type I and two type II keratins.

Functionally, may play a role in late hair differentiation. In Rattus norvegicus (Rat), this protein is Keratin, type I cytoskeletal 40 (Krt40).